The sequence spans 517 residues: Serine O-succinyltransferase (517 aa).

The N-terminal 46 residues, 1 to 46, are a transit peptide targeting the mitochondrion; the sequence is MSPLNGVARSFPRPFQAVTRRPFRVVQPAIACPSNSRSFNHSRSLR. The span at 36–64 shows a compositional bias: polar residues; that stretch reads SRSFNHSRSLRSTGSQSPAPSPRDSSNPA. The interval 36 to 66 is disordered; sequence SRSFNHSRSLRSTGSQSPAPSPRDSSNPALS. The AB hydrolase-1 domain occupies 134–386; that stretch reads NVILLHTGLS…LTQQLATKKQ (253 aa). The segment at 141–144 is important for substrate specificity; that stretch reads GLSA. Residue Ser238 is the Nucleophile of the active site. Arg307 lines the substrate pocket. Residues 413–436 form a disordered region; that stretch reads QPYQEQPSASTSAEQSASASETGS. The segment covering 416–436 has biased composition (low complexity); sequence QEQPSASTSAEQSASASETGS. Catalysis depends on residues Asp461 and His498. Residue Asp499 participates in substrate binding.

It belongs to the AB hydrolase superfamily. MetX family.

Its subcellular location is the mitochondrion. The catalysed reaction is succinyl-CoA + L-serine = O-succinyl-L-serine + CoA. It functions in the pathway amino-acid biosynthesis; L-cysteine biosynthesis; L-cysteine from L-serine: step 1/2. Transfers a succinyl group from succinyl-CoA to L-serine, forming succinyl-L-serine. Also has weak serine acetyl transferase activity and homoserine succinyl transferase activity. In Emericella nidulans (strain FGSC A4 / ATCC 38163 / CBS 112.46 / NRRL 194 / M139) (Aspergillus nidulans), this protein is Serine O-succinyltransferase.